Here is a 417-residue protein sequence, read N- to C-terminus: UDP-N-acetylglucosamine 1-carboxyvinyltransferase (417 aa).

22 to 23 (KN) serves as a coordination point for phosphoenolpyruvate. Arg93 contacts UDP-N-acetyl-alpha-D-glucosamine. Catalysis depends on Cys117, which acts as the Proton donor. A 2-(S-cysteinyl)pyruvic acid O-phosphothioketal modification is found at Cys117. Residues 122 to 126 (RPVDQ), Asp304, and Ile326 contribute to the UDP-N-acetyl-alpha-D-glucosamine site.

This sequence belongs to the EPSP synthase family. MurA subfamily.

It is found in the cytoplasm. The catalysed reaction is phosphoenolpyruvate + UDP-N-acetyl-alpha-D-glucosamine = UDP-N-acetyl-3-O-(1-carboxyvinyl)-alpha-D-glucosamine + phosphate. The protein operates within cell wall biogenesis; peptidoglycan biosynthesis. Its function is as follows. Cell wall formation. Adds enolpyruvyl to UDP-N-acetylglucosamine. This Neisseria meningitidis serogroup A / serotype 4A (strain DSM 15465 / Z2491) protein is UDP-N-acetylglucosamine 1-carboxyvinyltransferase.